A 511-amino-acid polypeptide reads, in one-letter code: uncharacterized protein (511 aa).

This is an uncharacterized protein from Acanthamoeba polyphaga (Amoeba).